A 706-amino-acid chain; its full sequence is Choline transporter-like protein 2 (706 aa).

Residues 1 to 33 (MGDERPHYYGKHGTPQKYDPTFKGPIYNRGCTD) lie on the Cytoplasmic side of the membrane. Thr14 carries the post-translational modification Phosphothreonine. The chain crosses the membrane as a helical span at residues 34–54 (IICCVFLLLAIVGYVAVGIIA). Over 55 to 232 (WTHGDPRKVI…RIFEDYTVSW (178 aa)) the chain is Extracellular. Asn187 and Asn200 each carry an N-linked (GlcNAc...) asparagine glycan. A helical membrane pass occupies residues 233-253 (YWIIIGLVIAMAMSLLFIILL). Over 254–256 (RFL) the chain is Cytoplasmic. Residues 257-277 (AGIMVWVMIIMVILVLGYGIF) form a helical membrane-spanning segment. Residues 278-315 (HCYMEYSRLRGEAGSDVSLVDLGFQTDFRVYLHLRQTW) lie on the Extracellular side of the membrane. Residues 316–336 (LAFMIILSILEVIIILLLIFL) traverse the membrane as a helical segment. At 337 to 364 (RKRILIAIALIKEASRAVGYVMCSLLYP) the chain is on the cytoplasmic side. The chain crosses the membrane as a helical span at residues 365-385 (LVTFFLLCLCIAYWASTAVFL). At 386-457 (STSNEAVYKI…FNAFMFFWLA (72 aa)) the chain is on the extracellular side. Asn417 carries N-linked (GlcNAc...) asparagine glycosylation. A helical membrane pass occupies residues 458–480 (NFVLALGQVTLAGAFASYYWALR). The Cytoplasmic portion of the chain corresponds to 481 to 504 (KPDDLPAFPLFSAFGRALRYHTGS). Residues 505-525 (LAFGALILAIVQIIRVILEYL) form a helical membrane-spanning segment. The Extracellular segment spans residues 526 to 563 (DQRLKAAENKFAKCLMTCLKCCFWCLEKFIKFLNRNAY). A helical membrane pass occupies residues 564-584 (IMIAIYGTNFCTSARNAFFLL). The Cytoplasmic segment spans residues 585-599 (MRNIIRVAVLDKVTD). A helical transmembrane segment spans residues 600-620 (FLFLLGKLLIVGSVGILAFFF). At 621–638 (FTHRIRIVQDTAPPLNYY) the chain is on the extracellular side. Residues 639–659 (WVPILTVIVGSYLIAHGFFSV) traverse the membrane as a helical segment. Over 660–706 (YGMCVDTLFLCFLEDLERNDGSAERPYFMSSTLKKLLNKTNKKAAES) the chain is Cytoplasmic.

The protein belongs to the CTL (choline transporter-like) family. Interacts with COCH. As to expression, present in supporting cells of the inner ear (at protein level). In terms of tissue distribution, expressed in inner ear vestibular tissue.

It is found in the cell membrane. Its subcellular location is the mitochondrion outer membrane. It carries out the reaction choline(out) + n H(+)(in) = choline(in) + n H(+)(out). It catalyses the reaction ethanolamine(out) + n H(+)(in) = ethanolamine(in) + n H(+)(out). In terms of biological role, choline/H+ antiporter, mainly in mitochodria. Also acts as a low-affinity ethanolamine/H+ antiporter, regulating the supply of extracellular ethanolamine (Etn) for the CDP-Etn pathway, redistribute intracellular Etn and balance the CDP-Cho and CDP-Etn arms of the Kennedy pathway. Its function is as follows. Does not exhibit choline transporter activity. The chain is Choline transporter-like protein 2 from Homo sapiens (Human).